We begin with the raw amino-acid sequence, 468 residues long: Eukaryotic translation initiation factor 3 subunit M (468 aa).

The tract at residues 42 to 61 (PLIEPLRQQEQSEEEPDRKQ) is disordered. Residues 206-377 (DLELAQTHVV…SEFLVHRATY (172 aa)) form the PCI domain. The segment at 418-468 (MQAAAEETGQGKSGDKGAKGGDRRRNPQQQQQSQPSQPQQAREVELVGGAE) is disordered. Residues 430–442 (SGDKGAKGGDRRR) show a composition bias toward basic and acidic residues. Residues 444-457 (PQQQQQSQPSQPQQ) are compositionally biased toward low complexity.

This sequence belongs to the eIF-3 subunit M family. In terms of assembly, component of the eukaryotic translation initiation factor 3 (eIF-3) complex.

The protein resides in the cytoplasm. Functionally, component of the eukaryotic translation initiation factor 3 (eIF-3) complex, which is involved in protein synthesis of a specialized repertoire of mRNAs and, together with other initiation factors, stimulates binding of mRNA and methionyl-tRNAi to the 40S ribosome. The eIF-3 complex specifically targets and initiates translation of a subset of mRNAs involved in cell proliferation. The polypeptide is Eukaryotic translation initiation factor 3 subunit M (Neosartorya fischeri (strain ATCC 1020 / DSM 3700 / CBS 544.65 / FGSC A1164 / JCM 1740 / NRRL 181 / WB 181) (Aspergillus fischerianus)).